The sequence spans 1358 residues: Tenascin-R (1358 aa).

A signal peptide spans 1–31 (MGIDGETVVLKNMLIGVNLILLGSMLKPSEC). The disordered stretch occupies residues 37–58 (TERAQRQTVEEEGGASSYNTSS). N-linked (GlcNAc...) asparagine glycosylation occurs at N55. Residues 127-157 (CASSSQVLQELLSRIEMLEREVSLLRDQCNT) are a coiled coil. An O-linked (Xyl...) (chondroitin sulfate) serine glycan is attached at S176. Residues N180 and N198 are each glycosylated (N-linked (GlcNAc...) asparagine). EGF-like domains lie at 188–199 (CICNEGWFGKNC), 219–230 (CICDSEYSGDDC), and 250–261 (CVCEEPYTGEDC). S271 carries an O-linked (Xyl...) (chondroitin sulfate) serine glycan. N278 carries an N-linked (GlcNAc...) asparagine glycan. The region spanning 281-292 (CLCQEGYAGEDC) is the EGF-like 4 domain. 2 disulfides stabilise this stretch: C297/C307 and C314/C323. An O-linked (Xyl...) (chondroitin sulfate) serine glycan is attached at S302. An EGF-like 5 domain is found at 312–323 (CICEEGYQGPDC). Fibronectin type-III domains follow at residues 328–420 (PPED…TPQG), 421–505 (LQFK…TVID), 506–597 (GPTQ…IDAP), 598–687 (KNLR…TELD), 688–777 (SPRD…FRPI), 778–865 (SHLH…TGID), 866–955 (PPKN…AMDS), 956–1042 (PMDL…TLLD), and 1043–1131 (PPDN…GGRV). Residues N392, N470, and N581 are each glycosylated (N-linked (GlcNAc...) asparagine). Phosphoserine is present on S724. N-linked (GlcNAc...) asparagine glycans are attached at residues N791, N869, N874, N1036, N1046, and N1261. Residues 1129–1344 (GRVFSHPQDC…FVEMKMRPYI (216 aa)) enclose the Fibrinogen C-terminal domain.

Belongs to the tenascin family. Interacts with BCAN and ACAN in a calcium-dependent manner. Interacts with SCN2B, PTPRZ1, and CSPG3. Forms oligomers. Isoforms 1 and 2 form respectively trimeric (tribrachion) and dimeric kink-armed rodlike structures, which are linked by disulfide bridges. Interacts with CNTN1, TNC and FN1. In terms of processing, contains N-linked oligosaccharides with a sulfated carbohydrate structures. Contains N-linked oligosaccharides, O-linked sialylated structures and O-linked chondroitin sulfate glycosaminoglycans. In terms of tissue distribution, brain-specific.

It is found in the secreted. Its subcellular location is the extracellular space. It localises to the extracellular matrix. In terms of biological role, neural extracellular matrix (ECM) protein involved in interactions with different cells and matrix components. Theses interactions can influence cellular behavior by either evoking a stable adhesion and differentiation, or repulsion and inhibition of neurite growth. Binding to cell surface gangliosides inhibits RGD-dependent integrin-mediated cell adhesion and results in an inhibition of PTK2/FAK1 (FAK) phosphorylation and cell detachment. Binding to membrane surface sulfatides results in a oligodendrocyte adhesion and differentiation. Interaction with CNTN1 induces a repulsion of neurons and an inhibition of neurite outgrowth. Interacts with SCN2B may play a crucial role in clustering and regulation of activity of sodium channels at nodes of Ranvier. TNR-linked chondroitin sulfate glycosaminoglycans are involved in the interaction with FN1 and mediates inhibition of cell adhesion and neurite outgrowth. The highly regulated addition of sulfated carbohydrate structure may modulate the adhesive properties of TNR over the course of development and during synapse maintenance. The chain is Tenascin-R (Tnr) from Mus musculus (Mouse).